The following is a 208-amino-acid chain: Uracil phosphoribosyltransferase (208 aa).

5-phospho-alpha-D-ribose 1-diphosphate contacts are provided by residues Arg-78, Arg-103, and 130–138 (DPMLATGGS). Residues Ile-193 and 198-200 (GDA) each bind uracil. Asp-199 lines the 5-phospho-alpha-D-ribose 1-diphosphate pocket.

The protein belongs to the UPRTase family. Mg(2+) serves as cofactor.

It catalyses the reaction UMP + diphosphate = 5-phospho-alpha-D-ribose 1-diphosphate + uracil. The protein operates within pyrimidine metabolism; UMP biosynthesis via salvage pathway; UMP from uracil: step 1/1. With respect to regulation, allosterically activated by GTP. In terms of biological role, catalyzes the conversion of uracil and 5-phospho-alpha-D-ribose 1-diphosphate (PRPP) to UMP and diphosphate. This chain is Uracil phosphoribosyltransferase, found in Wolinella succinogenes (strain ATCC 29543 / DSM 1740 / CCUG 13145 / JCM 31913 / LMG 7466 / NCTC 11488 / FDC 602W) (Vibrio succinogenes).